We begin with the raw amino-acid sequence, 295 residues long: UDP-N-acetylenolpyruvoylglucosamine reductase (295 aa).

The region spanning lysine 24 to glycine 188 is the FAD-binding PCMH-type domain. Residue arginine 168 is part of the active site. The active-site Proton donor is serine 217. Residue glutamate 287 is part of the active site.

It belongs to the MurB family. The cofactor is FAD.

It localises to the cytoplasm. It carries out the reaction UDP-N-acetyl-alpha-D-muramate + NADP(+) = UDP-N-acetyl-3-O-(1-carboxyvinyl)-alpha-D-glucosamine + NADPH + H(+). It participates in cell wall biogenesis; peptidoglycan biosynthesis. In terms of biological role, cell wall formation. The protein is UDP-N-acetylenolpyruvoylglucosamine reductase of Rickettsia akari (strain Hartford).